The chain runs to 125 residues: Small ribosomal subunit protein uS13 (125 aa).

Residues 93–125 (RAGLPVRGQRTRTNARTRRGARKTVAGKKKATR) form a disordered region. The span at 101–125 (QRTRTNARTRRGARKTVAGKKKATR) shows a compositional bias: basic residues.

This sequence belongs to the universal ribosomal protein uS13 family. In terms of assembly, part of the 30S ribosomal subunit. Forms a loose heterodimer with protein S19. Forms two bridges to the 50S subunit in the 70S ribosome.

Located at the top of the head of the 30S subunit, it contacts several helices of the 16S rRNA. In the 70S ribosome it contacts the 23S rRNA (bridge B1a) and protein L5 of the 50S subunit (bridge B1b), connecting the 2 subunits; these bridges are implicated in subunit movement. Contacts the tRNAs in the A and P-sites. The sequence is that of Small ribosomal subunit protein uS13 from Synechococcus elongatus (strain ATCC 33912 / PCC 7942 / FACHB-805) (Anacystis nidulans R2).